Consider the following 271-residue polypeptide: Type III pantothenate kinase (271 aa).

5-12 is an ATP binding site; sequence DISNSVTK. Substrate-binding positions include Tyr85 and 92–95; that span reads GADR. The active-site Proton acceptor is Asp94. Residue Asp114 participates in K(+) binding. Thr117 lines the ATP pocket. Thr169 lines the substrate pocket.

It belongs to the type III pantothenate kinase family. In terms of assembly, homodimer. Requires NH4(+) as cofactor. K(+) serves as cofactor.

The protein resides in the cytoplasm. It carries out the reaction (R)-pantothenate + ATP = (R)-4'-phosphopantothenate + ADP + H(+). It participates in cofactor biosynthesis; coenzyme A biosynthesis; CoA from (R)-pantothenate: step 1/5. Its function is as follows. Catalyzes the phosphorylation of pantothenate (Pan), the first step in CoA biosynthesis. This chain is Type III pantothenate kinase, found in Methylacidiphilum infernorum (isolate V4) (Methylokorus infernorum (strain V4)).